Consider the following 382-residue polypeptide: RNA exonuclease 3 (382 aa).

Positions valine 223–valine 369 constitute an Exonuclease domain.

This sequence belongs to the REXO1/REXO3 family.

It localises to the cytoplasm. The protein localises to the nucleus. 3' to 5' exoribonuclease required for proper 3' end maturation of MRP RNA and of the U5L snRNA. The sequence is that of RNA exonuclease 3 (REX3) from Eremothecium gossypii (strain ATCC 10895 / CBS 109.51 / FGSC 9923 / NRRL Y-1056) (Yeast).